The chain runs to 342 residues: Biotin synthase (342 aa).

The 225-residue stretch at 36–260 folds into the Radical SAM core domain; the sequence is NRIQISTLLS…MMPKSYIRLS (225 aa). Residues Cys-51, Cys-55, and Cys-58 each contribute to the [4Fe-4S] cluster site. Positions 95, 126, 186, and 258 each coordinate [2Fe-2S] cluster.

It belongs to the radical SAM superfamily. Biotin synthase family. As to quaternary structure, homodimer. Requires [4Fe-4S] cluster as cofactor. [2Fe-2S] cluster serves as cofactor.

It carries out the reaction (4R,5S)-dethiobiotin + (sulfur carrier)-SH + 2 reduced [2Fe-2S]-[ferredoxin] + 2 S-adenosyl-L-methionine = (sulfur carrier)-H + biotin + 2 5'-deoxyadenosine + 2 L-methionine + 2 oxidized [2Fe-2S]-[ferredoxin]. The protein operates within cofactor biosynthesis; biotin biosynthesis; biotin from 7,8-diaminononanoate: step 2/2. Its function is as follows. Catalyzes the conversion of dethiobiotin (DTB) to biotin by the insertion of a sulfur atom into dethiobiotin via a radical-based mechanism. This chain is Biotin synthase, found in Buchnera aphidicola subsp. Schizaphis graminum (strain Sg).